A 163-amino-acid chain; its full sequence is Crossover junction endodeoxyribonuclease RuvC (163 aa).

Residues aspartate 9, glutamate 76, and aspartate 148 contribute to the active site. Residues aspartate 9, glutamate 76, and aspartate 148 each contribute to the Mg(2+) site.

It belongs to the RuvC family. In terms of assembly, homodimer which binds Holliday junction (HJ) DNA. The HJ becomes 2-fold symmetrical on binding to RuvC with unstacked arms; it has a different conformation from HJ DNA in complex with RuvA. In the full resolvosome a probable DNA-RuvA(4)-RuvB(12)-RuvC(2) complex forms which resolves the HJ. The cofactor is Mg(2+).

The protein localises to the cytoplasm. The catalysed reaction is Endonucleolytic cleavage at a junction such as a reciprocal single-stranded crossover between two homologous DNA duplexes (Holliday junction).. The RuvA-RuvB-RuvC complex processes Holliday junction (HJ) DNA during genetic recombination and DNA repair. Endonuclease that resolves HJ intermediates. Cleaves cruciform DNA by making single-stranded nicks across the HJ at symmetrical positions within the homologous arms, yielding a 5'-phosphate and a 3'-hydroxyl group; requires a central core of homology in the junction. The consensus cleavage sequence is 5'-(A/T)TT(C/G)-3'. Cleavage occurs on the 3'-side of the TT dinucleotide at the point of strand exchange. HJ branch migration catalyzed by RuvA-RuvB allows RuvC to scan DNA until it finds its consensus sequence, where it cleaves and resolves the cruciform DNA. This is Crossover junction endodeoxyribonuclease RuvC from Trichormus variabilis (strain ATCC 29413 / PCC 7937) (Anabaena variabilis).